Reading from the N-terminus, the 572-residue chain is BOS complex subunit ncln (572 aa).

A signal peptide spans 1 to 35 (MFEEAGEVLENMLKVSFPLSLVLFLVLVCPLRAEA). Over 36–530 (AHEFSVYRMQ…TMNAYRVKPA (495 aa)) the chain is Extracellular. Residues N108, N234, and N436 are each glycosylated (N-linked (GlcNAc...) asparagine). A helical transmembrane segment spans residues 531–551 (IFDLLLAVCIASYLGVLYLAI). At 552-572 (QNFGLLYGFLRRVTAPRVKQH) the chain is on the cytoplasmic side.

This sequence belongs to the nicastrin family. Component of the multi-pass translocon (MPT) complex.

The protein localises to the endoplasmic reticulum membrane. Functionally, component of the multi-pass translocon (MPT) complex that mediates insertion of multi-pass membrane proteins into the lipid bilayer of membranes. The MPT complex takes over after the SEC61 complex: following membrane insertion of the first few transmembrane segments of proteins by the SEC61 complex, the MPT complex occludes the lateral gate of the SEC61 complex to promote insertion of subsequent transmembrane regions. Antagonizes Nodal signaling and subsequent organization of axial structures during mesodermal patterning. Ectopic expression results in cyclopia, due to a defect in mesendoderm patterning. This chain is BOS complex subunit ncln (ncln), found in Danio rerio (Zebrafish).